The following is a 37-amino-acid chain: Cytochrome b6-f complex subunit 5 (37 aa).

The helical transmembrane segment at 5 to 25 threads the bilayer; it reads LLSGIVLGLIPITLAGLFVTA.

Belongs to the PetG family. The 4 large subunits of the cytochrome b6-f complex are cytochrome b6, subunit IV (17 kDa polypeptide, PetD), cytochrome f and the Rieske protein, while the 4 small subunits are PetG, PetL, PetM and PetN. The complex functions as a dimer.

Its subcellular location is the plastid. It localises to the chloroplast thylakoid membrane. Component of the cytochrome b6-f complex, which mediates electron transfer between photosystem II (PSII) and photosystem I (PSI), cyclic electron flow around PSI, and state transitions. PetG is required for either the stability or assembly of the cytochrome b6-f complex. The chain is Cytochrome b6-f complex subunit 5 from Cryptomeria japonica (Japanese cedar).